The sequence spans 72 residues: UPF0270 protein PM1156 (72 aa).

Belongs to the UPF0270 family.

This chain is UPF0270 protein PM1156, found in Pasteurella multocida (strain Pm70).